We begin with the raw amino-acid sequence, 292 residues long: ATP synthase gamma chain (292 aa).

This sequence belongs to the ATPase gamma chain family. F-type ATPases have 2 components, CF(1) - the catalytic core - and CF(0) - the membrane proton channel. CF(1) has five subunits: alpha(3), beta(3), gamma(1), delta(1), epsilon(1). CF(0) has three main subunits: a, b and c.

It localises to the cell membrane. Functionally, produces ATP from ADP in the presence of a proton gradient across the membrane. The gamma chain is believed to be important in regulating ATPase activity and the flow of protons through the CF(0) complex. This Prosthecochloris aestuarii (strain DSM 271 / SK 413) protein is ATP synthase gamma chain.